We begin with the raw amino-acid sequence, 212 residues long: Ribosomal RNA small subunit methyltransferase G (212 aa).

Residues Gly-80, Leu-85, 131-132 (AE), and Arg-146 contribute to the S-adenosyl-L-methionine site.

The protein belongs to the methyltransferase superfamily. RNA methyltransferase RsmG family.

Its subcellular location is the cytoplasm. The catalysed reaction is guanosine(527) in 16S rRNA + S-adenosyl-L-methionine = N(7)-methylguanosine(527) in 16S rRNA + S-adenosyl-L-homocysteine. Functionally, specifically methylates the N7 position of guanine in position 527 of 16S rRNA. The protein is Ribosomal RNA small subunit methyltransferase G of Xanthomonas campestris pv. campestris (strain B100).